The chain runs to 448 residues: Phosphoglucosamine mutase (448 aa).

Residue S100 is the Phosphoserine intermediate of the active site. 4 residues coordinate Mg(2+): S100, D240, D242, and D244. Phosphoserine is present on S100.

The protein belongs to the phosphohexose mutase family. Mg(2+) serves as cofactor. In terms of processing, activated by phosphorylation.

It catalyses the reaction alpha-D-glucosamine 1-phosphate = D-glucosamine 6-phosphate. In terms of biological role, catalyzes the conversion of glucosamine-6-phosphate to glucosamine-1-phosphate. The sequence is that of Phosphoglucosamine mutase from Bacillus cereus (strain G9842).